The chain runs to 104 residues: MFAVIRTGGKQYRVTPNAVLKVEKLEAEPGSTITFTDVLAVGGEGNLTIGAPVVAGASVTATVIAQDRLDKIVVFKKRRRQNSRRKNGHRQHVTVLRVGDIVAA.

This sequence belongs to the bacterial ribosomal protein bL21 family. As to quaternary structure, part of the 50S ribosomal subunit. Contacts protein L20.

Functionally, this protein binds to 23S rRNA in the presence of protein L20. In Granulibacter bethesdensis (strain ATCC BAA-1260 / CGDNIH1), this protein is Large ribosomal subunit protein bL21.